Consider the following 354-residue polypeptide: 5,10-methenyltetrahydromethanopterin hydrogenase (354 aa).

This sequence belongs to the HMD family.

It carries out the reaction 5,10-methenyl-5,6,7,8-tetrahydromethanopterin + H2 = 5,10-methylenetetrahydromethanopterin + H(+). The protein operates within one-carbon metabolism; methanogenesis from CO(2); 5,10-methylene-5,6,7,8-tetrahydromethanopterin from 5,10-methenyl-5,6,7,8-tetrahydromethanopterin (hydrogen route): step 1/1. Its function is as follows. Catalyzes the reversible reduction of methenyl-H(4)MPT(+) to methylene-H(4)MPT. The chain is 5,10-methenyltetrahydromethanopterin hydrogenase from Methanococcus vannielii (strain ATCC 35089 / DSM 1224 / JCM 13029 / OCM 148 / SB).